The following is a 131-amino-acid chain: MLIGVGTDIVQIPRIEKILHLYPELFAKKILTSKELKQFALLGKINHAAFLAKRFAAKEAVSKAFGVGIGQGINFKDITILNNDLGKPIVEVSSNYTNKLSPFNIHLSLADDYPVCVAFAVIESSYNVIRG.

Residues Asp-8 and Glu-59 each contribute to the Mg(2+) site.

This sequence belongs to the P-Pant transferase superfamily. AcpS family. Mg(2+) serves as cofactor.

Its subcellular location is the cytoplasm. It catalyses the reaction apo-[ACP] + CoA = holo-[ACP] + adenosine 3',5'-bisphosphate + H(+). Functionally, transfers the 4'-phosphopantetheine moiety from coenzyme A to a Ser of acyl-carrier-protein. The sequence is that of Holo-[acyl-carrier-protein] synthase from Rickettsia rickettsii (strain Iowa).